Reading from the N-terminus, the 397-residue chain is Tryptophan synthase beta chain (397 aa).

Position 87 is an N6-(pyridoxal phosphate)lysine (Lys87).

Belongs to the TrpB family. In terms of assembly, tetramer of two alpha and two beta chains. Requires pyridoxal 5'-phosphate as cofactor.

It catalyses the reaction (1S,2R)-1-C-(indol-3-yl)glycerol 3-phosphate + L-serine = D-glyceraldehyde 3-phosphate + L-tryptophan + H2O. The protein operates within amino-acid biosynthesis; L-tryptophan biosynthesis; L-tryptophan from chorismate: step 5/5. The beta subunit is responsible for the synthesis of L-tryptophan from indole and L-serine. The polypeptide is Tryptophan synthase beta chain (Salmonella arizonae (strain ATCC BAA-731 / CDC346-86 / RSK2980)).